Consider the following 176-residue polypeptide: MDDTGSNPPIAGPFQPAHPPTLDNPITEAPAPHTTPVAGKTGPDAAAQGMGGGARGSISSESSKLIDESTKLFPNVAGAASEAFRSERSASTSSTTSETGSDRPMGSASTVTEVPYGRRPSHGHGGHHGLFEGLMDQKRRNDPASVARRQSLNEQRPVPQGFIAKMWDNWVRGTTP.

2 disordered regions span residues 1–66 (MDDT…SKLI) and 79–162 (AASE…PQGF). The segment covering 79 to 99 (AASEAFRSERSASTSSTTSET) has biased composition (low complexity).

This chain is Conidiation-specific protein 8 (con-8), found in Neurospora crassa (strain ATCC 24698 / 74-OR23-1A / CBS 708.71 / DSM 1257 / FGSC 987).